Reading from the N-terminus, the 249-residue chain is MTRKLVLLRHGQSQWNLDNRFTGWVDVELTDQGCQEAVAAGKLMKDEGLQFDVAHTSVLKRAIHTLQGALKELDQDWLPVSKSWRLNERHYGGLQGLDKAETAAKHGEEQVKIWRRSYDIPPPAMDVDDPGHPCHDRRYATLDRNALPGTESLATTLVRVLPYWHDAIAPQLKAGQTVLVTAHGNSLRALYKYLNDVSNEQILELNIPTGIPLLFELDDNLQVRSFRYLGDPEAAKRAAEAVANQGKAK.

Substrate-binding positions include 9–16 (RHGQSQWN), 22–23 (TG), Arg-61, 88–91 (ERHY), Lys-99, 115–116 (RR), and 184–185 (GN). The Tele-phosphohistidine intermediate role is filled by His-10. Glu-88 (proton donor/acceptor) is an active-site residue.

The protein belongs to the phosphoglycerate mutase family. BPG-dependent PGAM subfamily. Homodimer.

The catalysed reaction is (2R)-2-phosphoglycerate = (2R)-3-phosphoglycerate. Its pathway is carbohydrate degradation; glycolysis; pyruvate from D-glyceraldehyde 3-phosphate: step 3/5. Functionally, catalyzes the interconversion of 2-phosphoglycerate and 3-phosphoglycerate. In Xanthomonas oryzae pv. oryzae (strain PXO99A), this protein is 2,3-bisphosphoglycerate-dependent phosphoglycerate mutase.